The sequence spans 316 residues: Annexin D7 (316 aa).

At A2 the chain carries N-acetylalanine. Annexin repeat units lie at residues P11–F82, E83–S154, T166–K237, and Y241–G312. F24, G26, G28, and E68 together coordinate Ca(2+). S95 bears the Phosphoserine mark. Phosphothreonine occurs at positions 100 and 112. Y129 is subject to Phosphotyrosine. Ca(2+)-binding residues include I254 and G258. Y283 bears the Phosphotyrosine mark. S288 carries the phosphoserine modification. Residues D298, T299, and E304 each coordinate Ca(2+).

Belongs to the annexin (TC 1.A.31.1) family. As to expression, expressed in flowers.

The polypeptide is Annexin D7 (ANNAT7) (Arabidopsis thaliana (Mouse-ear cress)).